The sequence spans 72 residues: UPF0270 protein plu0398 (72 aa).

Belongs to the UPF0270 family.

The sequence is that of UPF0270 protein plu0398 from Photorhabdus laumondii subsp. laumondii (strain DSM 15139 / CIP 105565 / TT01) (Photorhabdus luminescens subsp. laumondii).